Consider the following 599-residue polypeptide: DNA primase (599 aa).

The CHC2-type zinc finger occupies 38-62 (CPFHDEKTPSFTVSEDKQICHCFGC). Positions 260 to 341 (DEIVLLEGFM…NVFVIQLPSG (82 aa)) constitute a Toprim domain. Residues Glu-266, Asp-310, and Asp-312 each coordinate Mg(2+).

This sequence belongs to the DnaG primase family. In terms of assembly, monomer. Interacts with DnaB. Zn(2+) serves as cofactor. The cofactor is Mg(2+).

It catalyses the reaction ssDNA + n NTP = ssDNA/pppN(pN)n-1 hybrid + (n-1) diphosphate.. Functionally, RNA polymerase that catalyzes the synthesis of short RNA molecules used as primers for DNA polymerase during DNA replication. This is DNA primase from Staphylococcus aureus (strain MRSA252).